Here is a 299-residue protein sequence, read N- to C-terminus: MSALQPLIDTYLNHIASQRGLSPVTITNYQSNLAEFVALLNENKVGCWTELDGQLVRLMVKTLHKKGLKARSIATKLSALRSFLDYLVQFDILSNNPAKGIAAPKLDKPLPKNVSVDDMFQLLDIDEKDPLSIRDQCMMELMYSSGLRLSELVGINLQDIKLSAKEIMVTGKGSKQRLLPITDRAVATVKIWLKIRPEFCIKDEKALFVSKQKKRISARNVQARMEKWGLKQALPGHINPHKLRHSFATHMLESSGNLRAVQTLLGHADLATTQIYTHLDFQHLSKIYDQAHPRAKRKK.

In terms of domain architecture, Core-binding (CB) spans 2-88; sequence SALQPLIDTY…ALRSFLDYLV (87 aa). Positions 109–289 constitute a Tyr recombinase domain; the sequence is PLPKNVSVDD…DFQHLSKIYD (181 aa). Active-site residues include arginine 148, lysine 172, histidine 241, arginine 244, and histidine 267. The active-site O-(3'-phospho-DNA)-tyrosine intermediate is the tyrosine 276.

Belongs to the 'phage' integrase family. XerC subfamily. As to quaternary structure, forms a cyclic heterotetrameric complex composed of two molecules of XerC and two molecules of XerD.

It is found in the cytoplasm. Functionally, site-specific tyrosine recombinase, which acts by catalyzing the cutting and rejoining of the recombining DNA molecules. The XerC-XerD complex is essential to convert dimers of the bacterial chromosome into monomers to permit their segregation at cell division. It also contributes to the segregational stability of plasmids. In Psychromonas ingrahamii (strain DSM 17664 / CCUG 51855 / 37), this protein is Tyrosine recombinase XerC.